Here is a 39-residue protein sequence, read N- to C-terminus: Cygnin (39 aa).

Gln-1 carries the post-translational modification Pyrrolidone carboxylic acid. Cystine bridges form between Cys-6–Cys-33, Cys-12–Cys-28, and Cys-16–Cys-32.

This sequence belongs to the transferrin family.

This chain is Cygnin, found in Cygnus atratus (Black swan).